Reading from the N-terminus, the 503-residue chain is WD repeat-containing protein 55 homolog (503 aa).

Disordered regions lie at residues 1–21 (MHTHNNFKTPSDADELDDLDD) and 35–132 (ALVG…DDLD). 3 stretches are compositionally biased toward acidic residues: residues 12–21 (DADELDDLDD), 40–50 (DVSDSDIDEHD), and 78–96 (NAEDSSDSDDSMLEEDEAE). WD repeat units lie at residues 157–196 (KLEDFITDVCFHPDRDIIALATIIGDVHLYEYGNEGNKLL), 201–242 (VHSK…KLYE), 244–282 (AHDDAINKLHVLDENLFATGDDAGTVKLWDLRTKNPIFE), 285–324 (EVEDQITQMITNDQKKLLLATSADGYLTTFNIAARKLYVQ), 327–366 (PYEEELNCMGIYRGSSKLVVGTSKGKLYSYNWGYFGYHCD), and 411–450 (QHNMPIESLDINTSGELLASSSHNNDVRFWNVKYFEDFGD). Residues 483 to 503 (TKEDEDNADNNDAAAGPSNSA) form a disordered region.

This sequence belongs to the WD repeat WDR55 family.

The chain is WD repeat-containing protein 55 homolog from Drosophila persimilis (Fruit fly).